Consider the following 196-residue polypeptide: Carnitine operon protein CaiE (196 aa).

The tract at residues 173 to 196 is disordered; it reads TQPLRQMEENRPRLQGTTDVTPKR. The segment covering 187–196 has biased composition (polar residues); it reads QGTTDVTPKR.

Belongs to the transferase hexapeptide repeat family.

The protein operates within amine and polyamine metabolism; carnitine metabolism. Overproduction of CaiE stimulates the activity of CaiB and CaiD. The sequence is that of Carnitine operon protein CaiE from Shigella flexneri serotype 5b (strain 8401).